Here is a 287-residue protein sequence, read N- to C-terminus: 2-dehydro-3-deoxyphosphooctonate aldolase (287 aa).

Belongs to the KdsA family.

It localises to the cytoplasm. It carries out the reaction D-arabinose 5-phosphate + phosphoenolpyruvate + H2O = 3-deoxy-alpha-D-manno-2-octulosonate-8-phosphate + phosphate. It participates in carbohydrate biosynthesis; 3-deoxy-D-manno-octulosonate biosynthesis; 3-deoxy-D-manno-octulosonate from D-ribulose 5-phosphate: step 2/3. Its pathway is bacterial outer membrane biogenesis; lipopolysaccharide biosynthesis. In Leptospira interrogans serogroup Icterohaemorrhagiae serovar copenhageni (strain Fiocruz L1-130), this protein is 2-dehydro-3-deoxyphosphooctonate aldolase.